The chain runs to 281 residues: DegV domain-containing protein YqaC (281 aa).

One can recognise a DegV domain in the interval 3 to 279 (LAVITDSSAD…LNTVAYGISP (277 aa)). Residues T60 and S93 each coordinate hexadecanoate.

Functionally, may bind long-chain fatty acids, such as palmitate, and may play a role in lipid transport or fatty acid metabolism. The polypeptide is DegV domain-containing protein YqaC (yqaC) (Lactococcus lactis subsp. lactis (strain IL1403) (Streptococcus lactis)).